A 361-amino-acid chain; its full sequence is MTVPHIPRGPVMADIAAFRLTEEEKQRLLDPAVGGIILFRRNFQNIEQLKTLTAEIKALRTPELIIAVDHEGGRVQRFIEGFTRLPAMSTLGEIWDKDGASAAETAAGQVGRVLATELSACGIDLSFTPVLDLDWGNCPVIGNRSFHRNPEAVARLALALQKGLTKGGMKSCGKHFPGHGFVEGDSHLVLPEDWRSLSELETADLAPFRIMSREGMAAVMPAHVVYPQVDTKPAGFSEIWLKQILRRDIGFKGVIFSDDLTMEGACGAGGIKERARISFEAGCDIVLVCNRPDLVDELREDFRIPDNPTLAQRWQYMANTLGSAAAQAVMQTADFQAAQAFVAGLASPQDTAGGVKVGEAF.

Residues Asp69, Arg77, Arg144, and 174–175 (KH) contribute to the substrate site. The Proton donor/acceptor role is filled by His187. The active-site Nucleophile is Asp258.

The protein belongs to the glycosyl hydrolase 3 family. NagZ subfamily.

It is found in the cytoplasm. The enzyme catalyses Hydrolysis of terminal non-reducing N-acetyl-D-hexosamine residues in N-acetyl-beta-D-hexosaminides.. It functions in the pathway cell wall biogenesis; peptidoglycan recycling. Its function is as follows. Plays a role in peptidoglycan recycling by cleaving the terminal beta-1,4-linked N-acetylglucosamine (GlcNAc) from peptide-linked peptidoglycan fragments, giving rise to free GlcNAc, anhydro-N-acetylmuramic acid and anhydro-N-acetylmuramic acid-linked peptides. In Neisseria meningitidis serogroup B (strain ATCC BAA-335 / MC58), this protein is Beta-hexosaminidase.